Consider the following 1401-residue polypeptide: DNA-directed RNA polymerase subunit beta' (1401 aa).

Positions 70, 72, 85, and 88 each coordinate Zn(2+). Residues aspartate 460, aspartate 462, and aspartate 464 each contribute to the Mg(2+) site. Positions 808, 882, 889, and 892 each coordinate Zn(2+).

This sequence belongs to the RNA polymerase beta' chain family. In terms of assembly, the RNAP catalytic core consists of 2 alpha, 1 beta, 1 beta' and 1 omega subunit. When a sigma factor is associated with the core the holoenzyme is formed, which can initiate transcription. It depends on Mg(2+) as a cofactor. The cofactor is Zn(2+).

It carries out the reaction RNA(n) + a ribonucleoside 5'-triphosphate = RNA(n+1) + diphosphate. In terms of biological role, DNA-dependent RNA polymerase catalyzes the transcription of DNA into RNA using the four ribonucleoside triphosphates as substrates. This chain is DNA-directed RNA polymerase subunit beta', found in Legionella pneumophila (strain Lens).